The sequence spans 520 residues: Sodium-dependent dicarboxylate transporter SdcS (520 aa).

14 consecutive transmembrane segments (helical) span residues 30 to 50, 55 to 75, 77 to 97, 104 to 124, 160 to 180, 207 to 227, 242 to 262, 298 to 318, 323 to 343, 362 to 382, 399 to 419, 428 to 448, 452 to 472, and 491 to 511; these read AGQLIGLILGPLLFLLTLLFF, LPWEGVYVLAITLWIATWWIT, AIPIAATSLLPIVLLPLGHIL, SEYGNDIIFLFLGGFILAIAM, SMFVSNTAAVMIMIPIGLAII, IGYAGTIGGLGTLIGTPPLII, FAKWMIVGIPTVIVLLGITWL, KVVQTIFVLASLLWITREFLL, VTSSVADGTIAIFISILLFVI, ELPWGVLILFGGGLALAKGIS, GVSPILIVIVITIFVLFLTEV, MILPILATLSVAVGVHPLLLM, AMAANCAYMLPVGTPPNAIIF, and LISAIIIILVVYYVMPIVLGI.

This sequence belongs to the SLC13A/DASS transporter (TC 2.A.47) family. NADC subfamily.

Its subcellular location is the cell membrane. Mediates the transport of the dicarboxylates fumarate, malate, and succinate across the cytoplasmic membrane via a Na(+)-electrochemical gradient. This Staphylococcus aureus (strain bovine RF122 / ET3-1) protein is Sodium-dependent dicarboxylate transporter SdcS (sdcS).